The sequence spans 91 residues: Large ribosomal subunit protein eL37B (91 aa).

Zn(2+) contacts are provided by Cys19, Cys22, Cys34, and Cys37. The C4-type zinc-finger motif lies at 19–37 (CRRCGKRSFHIQKSTCACC).

This sequence belongs to the eukaryotic ribosomal protein eL37 family. As to quaternary structure, component of the large ribosomal subunit (LSU). Mature yeast ribosomes consist of a small (40S) and a large (60S) subunit. The 40S small subunit contains 1 molecule of ribosomal RNA (18S rRNA) and at least 33 different proteins. The large 60S subunit contains 3 rRNA molecules (25S, 5.8S and 5S rRNA) and at least 46 different proteins. Requires Zn(2+) as cofactor.

The protein resides in the cytoplasm. Its function is as follows. Component of the ribosome, a large ribonucleoprotein complex responsible for the synthesis of proteins in the cell. The small ribosomal subunit (SSU) binds messenger RNAs (mRNAs) and translates the encoded message by selecting cognate aminoacyl-transfer RNA (tRNA) molecules. The large subunit (LSU) contains the ribosomal catalytic site termed the peptidyl transferase center (PTC), which catalyzes the formation of peptide bonds, thereby polymerizing the amino acids delivered by tRNAs into a polypeptide chain. The nascent polypeptides leave the ribosome through a tunnel in the LSU and interact with protein factors that function in enzymatic processing, targeting, and the membrane insertion of nascent chains at the exit of the ribosomal tunnel. This is Large ribosomal subunit protein eL37B (rpl3702) from Schizosaccharomyces pombe (strain 972 / ATCC 24843) (Fission yeast).